We begin with the raw amino-acid sequence, 282 residues long: 3-methyl-2-oxobutanoate hydroxymethyltransferase (282 aa).

Mg(2+) is bound by residues D46 and D85. 3-methyl-2-oxobutanoate is bound by residues 46–47 (DS), D85, and K115. Position 117 (E117) interacts with Mg(2+). E184 functions as the Proton acceptor in the catalytic mechanism.

It belongs to the PanB family. In terms of assembly, homodecamer; pentamer of dimers. Requires Mg(2+) as cofactor.

Its subcellular location is the cytoplasm. The catalysed reaction is 3-methyl-2-oxobutanoate + (6R)-5,10-methylene-5,6,7,8-tetrahydrofolate + H2O = 2-dehydropantoate + (6S)-5,6,7,8-tetrahydrofolate. The protein operates within cofactor biosynthesis; (R)-pantothenate biosynthesis; (R)-pantoate from 3-methyl-2-oxobutanoate: step 1/2. Catalyzes the reversible reaction in which hydroxymethyl group from 5,10-methylenetetrahydrofolate is transferred onto alpha-ketoisovalerate to form ketopantoate. The polypeptide is 3-methyl-2-oxobutanoate hydroxymethyltransferase (Alkaliphilus metalliredigens (strain QYMF)).